The sequence spans 327 residues: Zinc transport protein ZntB (327 aa).

The Cytoplasmic portion of the chain corresponds to 1–271 (MESFAGKELQ…AMNRRTYTMS (271 aa)). A helical transmembrane segment spans residues 272–292 (LLAMVFLPTTFLTGLFGVNLG). The Periplasmic portion of the chain corresponds to 293–300 (GIPGGDAP). A helical transmembrane segment spans residues 301–321 (FGFFTFCLMLVILVGGVAWWL). The Cytoplasmic portion of the chain corresponds to 322–327 (KRSKWL).

The protein belongs to the CorA metal ion transporter (MIT) (TC 1.A.35) family.

The protein localises to the cell inner membrane. It catalyses the reaction Zn(2+)(out) + H(+)(out) = Zn(2+)(in) + H(+)(in). Zinc transporter. Acts as a Zn(2+):proton symporter, which likely mediates zinc ion uptake. This chain is Zinc transport protein ZntB, found in Pectobacterium carotovorum subsp. carotovorum (strain PC1).